We begin with the raw amino-acid sequence, 369 residues long: Pyrimidine monooxygenase RutA (369 aa).

Residues 49–50 (IK), N115, E124, 140–141 (RY), and S190 each bind FMN.

Belongs to the NtaA/SnaA/DszA monooxygenase family. RutA subfamily.

The catalysed reaction is uracil + FMNH2 + NADH + O2 = (Z)-3-ureidoacrylate + FMN + NAD(+) + H2O + H(+). It catalyses the reaction thymine + FMNH2 + NADH + O2 = (Z)-2-methylureidoacrylate + FMN + NAD(+) + H2O + H(+). In terms of biological role, catalyzes the pyrimidine ring opening between N-3 and C-4 by an unusual flavin hydroperoxide-catalyzed mechanism, adding oxygen atoms in the process to yield ureidoacrylate peracid, that immediately reacts with FMN forming ureidoacrylate and FMN-N(5)-oxide. The FMN-N(5)-oxide reacts spontaneously with NADH to produce FMN. Requires the flavin reductase RutF to regenerate FMN in vivo. In Acinetobacter baylyi (strain ATCC 33305 / BD413 / ADP1), this protein is Pyrimidine monooxygenase RutA.